Consider the following 154-residue polypeptide: Ribonuclease HI (154 aa).

The RNase H type-1 domain occupies 1–142 (MPKQIEIFTD…CDELAKKGAE (142 aa)). Mg(2+)-binding residues include aspartate 10, glutamate 48, aspartate 70, and aspartate 134.

It belongs to the RNase H family. As to quaternary structure, monomer. It depends on Mg(2+) as a cofactor.

The protein resides in the cytoplasm. It carries out the reaction Endonucleolytic cleavage to 5'-phosphomonoester.. In terms of biological role, endonuclease that specifically degrades the RNA of RNA-DNA hybrids. In Haemophilus influenzae (strain ATCC 51907 / DSM 11121 / KW20 / Rd), this protein is Ribonuclease HI (rnhA).